Reading from the N-terminus, the 132-residue chain is 3'-dehydrocarminate deglycosidase beta subunit (132 aa).

Belongs to the C-glycoside deglycosidase beta subunit family. Heterodimer composed of an alpha subunit (CarB) and a beta subunit (CarC). Mg(2+) is required as a cofactor.

The catalysed reaction is 3'-dehydrocarminate + H(+) = kermesate + 1,5-anhydro-D-erythro-hex-1-en-3-ulose. Its activity is regulated as follows. Activity is strongly reduced in the presence of chelating agents. In terms of biological role, carbon-carbon bond-cleaving enzyme which participates in a carminate degradation pathway. Cleaves the C-C bond in 3'-dehydrocarminate to form kermesate. Also shows weak activity with other C-glycosides, such as 3''-dehydropuerarin (3''-oxo-puerarin), 3''-dehydroisoorientin (3''-oxo-homoorientin) and 3'-dehydromangiferin (3'-oxo-mangiferin). This chain is 3'-dehydrocarminate deglycosidase beta subunit, found in Microbacterium sp.